The primary structure comprises 129 residues: Small ribosomal subunit protein eS6 (129 aa).

It belongs to the eukaryotic ribosomal protein eS6 family.

This chain is Small ribosomal subunit protein eS6, found in Archaeoglobus fulgidus (strain ATCC 49558 / DSM 4304 / JCM 9628 / NBRC 100126 / VC-16).